The chain runs to 144 residues: Large ribosomal subunit protein uL15 (144 aa).

A disordered region spans residues Met1–Leu57. A compositionally biased stretch (gly residues) spans Arg21–Gly31. Residues Gly32–Gly44 are compositionally biased toward basic residues.

This sequence belongs to the universal ribosomal protein uL15 family. As to quaternary structure, part of the 50S ribosomal subunit.

In terms of biological role, binds to the 23S rRNA. This Vibrio cholerae serotype O1 (strain ATCC 39315 / El Tor Inaba N16961) protein is Large ribosomal subunit protein uL15.